A 163-amino-acid chain; its full sequence is Nucleotide-binding protein HS_0688 (163 aa).

This sequence belongs to the YajQ family.

In terms of biological role, nucleotide-binding protein. The protein is Nucleotide-binding protein HS_0688 of Histophilus somni (strain 129Pt) (Haemophilus somnus).